Here is a 165-residue protein sequence, read N- to C-terminus: ATP synthase subunit b (165 aa).

A helical transmembrane segment spans residues 7–27; the sequence is STTIGDIIIVSGSVLLLFILI.

Belongs to the ATPase B chain family. F-type ATPases have 2 components, F(1) - the catalytic core - and F(0) - the membrane proton channel. F(1) has five subunits: alpha(3), beta(3), gamma(1), delta(1), epsilon(1). F(0) has three main subunits: a(1), b(2) and c(10-14). The alpha and beta chains form an alternating ring which encloses part of the gamma chain. F(1) is attached to F(0) by a central stalk formed by the gamma and epsilon chains, while a peripheral stalk is formed by the delta and b chains.

The protein resides in the cell membrane. In terms of biological role, f(1)F(0) ATP synthase produces ATP from ADP in the presence of a proton or sodium gradient. F-type ATPases consist of two structural domains, F(1) containing the extramembraneous catalytic core and F(0) containing the membrane proton channel, linked together by a central stalk and a peripheral stalk. During catalysis, ATP synthesis in the catalytic domain of F(1) is coupled via a rotary mechanism of the central stalk subunits to proton translocation. Functionally, component of the F(0) channel, it forms part of the peripheral stalk, linking F(1) to F(0). This is ATP synthase subunit b from Streptococcus agalactiae serotype Ia (strain ATCC 27591 / A909 / CDC SS700).